A 79-amino-acid chain; its full sequence is Small ribosomal subunit protein bS18 (79 aa).

The protein belongs to the bacterial ribosomal protein bS18 family. Part of the 30S ribosomal subunit. Forms a tight heterodimer with protein bS6.

Functionally, binds as a heterodimer with protein bS6 to the central domain of the 16S rRNA, where it helps stabilize the platform of the 30S subunit. The polypeptide is Small ribosomal subunit protein bS18 (Latilactobacillus sakei subsp. sakei (strain 23K) (Lactobacillus sakei subsp. sakei)).